The following is a 609-amino-acid chain: Oxidoreductase tpcJ (609 aa).

The first 16 residues, 1 to 16 (MITVIKWLVSGCCALA), serve as a signal peptide directing secretion. Residues Asn63, Asn107, Asn113, Asn240, Asn283, Asn471, and Asn601 are each glycosylated (N-linked (GlcNAc...) asparagine). Plastocyanin-like domains are found at residues 66-186 (VSQQ…HGPS), 196-351 (PWLL…RYDE), and 429-567 (VDWK…EQPK).

Belongs to the multicopper oxidase family. As to expression, specifically expressed in conidia.

The protein operates within secondary metabolite biosynthesis. Oxidoreductase; part of the gene cluster that mediates the biosynthesis of trypacidin, a mycotoxin with antiprotozoal activity and that plays a role in the infection process. The pathway begins with the synthesis of atrochrysone thioester by the polyketide synthase (PKS) tpcC. The atrochrysone carboxyl ACP thioesterase tpcB then breaks the thioester bond and releases the atrochrysone carboxylic acid from tpcC. The decarboxylase tpcK converts atrochrysone carboxylic acid to atrochrysone which is further reduced into emodin anthrone. The next step is performed by the emodin anthrone oxygenase tpcL that catalyzes the oxidation of emodinanthrone to emodin. Emodin O-methyltransferase encoded by tpcA catalyzes methylation of the 8-hydroxy group of emodin to form questin. Ring cleavage of questin by questin oxidase tpcI leads to desmethylsulochrin via several intermediates including questin epoxide. Another methylation step catalyzed by tpcM leads to the formation of sulochrin which is further converted to monomethylsulfochrin by tpcH. Finally, the tpcJ catalyzes the conversion of monomethylsulfochrin to trypacidin. Trypacidin is toxic for human pulmonary and bronchial epithelial cells by initiating the intracellular formation of nitric oxide (NO) and hydrogen peroxide (H(2)O(2)), thus triggering host necrotic cell death. The trypacidin pathway is also able to produce endocrocin via a distinct route from the endocrocin Enc pathway. This Aspergillus fumigatus (strain ATCC MYA-4609 / CBS 101355 / FGSC A1100 / Af293) (Neosartorya fumigata) protein is Oxidoreductase tpcJ.